Consider the following 674-residue polypeptide: Glutaminase kidney isoform, mitochondrial (674 aa).

The transit peptide at 1–54 directs the protein to the mitochondrion; it reads MMRLRGSAMLRELLLRPPAAVGAVLRRAQPLGTLCRRPRGGSRPTAGLVAAARL. Residues 56–123 form a disordered region; the sequence is PWWGGGGRAK…PGETDAFGNS (68 aa). Residues 58 to 71 show a composition bias toward gly residues; the sequence is WGGGGRAKGPGAGG. Residues 89 to 101 are compositionally biased toward low complexity; sequence PPQQQQQQQQQPG. N6-succinyllysine occurs at positions 135 and 169. Position 291 (S291) interacts with substrate. The residue at position 316 (K316) is an N6-acetyllysine. The segment at 320 to 327 is highly mobile activation loop; it reads GLRFNKLF. Residues N340, E386, N393, Y419, Y471, and V489 each contribute to the substrate site. ANK repeat units follow at residues 590-619 and 624-653; these read DSRT…VNPF and WNNT…QYTP. The interval 652-674 is disordered; it reads TPQGDSDDGKGNQTVHKNLDGLL. The residue at position 657 (S657) is a Phosphoserine.

Belongs to the glutaminase family. Homotetramer, dimer of dimers. The tetramers can assemble into rod-like oligomers (in vitro), but the physiological significance of this is not clear. Interacts with RAF1 and MAP2K2. Interacts with ATCAY; the interaction is direct and may control GLS localization, negatively regulating its activity. Synthesized as a 74-kDa cytosolic precursor which is proteolytically processed by the mitochondrial-processing peptidase (MPP) via a 72-kDa intermediate to yield the mature mitochondrial 68- and 65-kDa subunits.

The protein resides in the mitochondrion. Its subcellular location is the cytoplasm. It localises to the cytosol. The protein localises to the mitochondrion matrix. It carries out the reaction L-glutamine + H2O = L-glutamate + NH4(+). Isoform 1 and isoform 2 are activated by phosphate, due to increased affinity for glutamine. At phosphate concentrations above 10 mM, isoform 2 is more efficient than isoform 1. In terms of biological role, catalyzes the first reaction in the primary pathway for the renal catabolism of glutamine. Plays a role in maintaining acid-base homeostasis. Regulates the levels of the neurotransmitter glutamate, the main excitatory neurotransmitter in the brain. This Mus musculus (Mouse) protein is Glutaminase kidney isoform, mitochondrial (Gls).